The following is an 882-amino-acid chain: Serine/threonine-protein kinase greatwall (882 aa).

Met1 carries the post-translational modification N-acetylmethionine. The Protein kinase domain occupies 35–838 (FTIVKPISRG…MKELKRHHLF (804 aa)). ATP is bound by residues 41-49 (ISRGAFGKV) and Lys62. Asp156 functions as the Proton acceptor in the catalytic mechanism. Phosphothreonine occurs at positions 207 and 222. Residues Ser293, Ser371, and Ser454 each carry the phosphoserine modification. Residue Thr521 is modified to Phosphothreonine. Phosphoserine occurs at positions 554, 558, 633, 660, and 671. The interval 713–736 (TPNQVKSGTPYRTPKSVRRGAAPV) is disordered. Thr725 carries the phosphothreonine modification. Phosphoserine is present on Ser728. Thr744 carries the phosphothreonine; by CDK1 modification. Residues 839 to 882 (SDVDWENLQHQTMPFIPQPDDETDTSYFEARNNAQHLTISGFSL) enclose the AGC-kinase C-terminal domain. Phosphoserine is present on residues Ser878 and Ser881.

It belongs to the protein kinase superfamily. AGC Ser/Thr protein kinase family. Phosphorylation at Thr-744 by CDK1 during M phase activates its kinase activity. Maximum phosphorylation occurs in prometaphase.

Its subcellular location is the cytoplasm. It is found in the cytoskeleton. The protein resides in the microtubule organizing center. The protein localises to the centrosome. It localises to the nucleus. It carries out the reaction L-seryl-[protein] + ATP = O-phospho-L-seryl-[protein] + ADP + H(+). It catalyses the reaction L-threonyl-[protein] + ATP = O-phospho-L-threonyl-[protein] + ADP + H(+). Functionally, serine/threonine kinase that plays a key role in M phase by acting as a regulator of mitosis entry and maintenance. Acts by promoting the inactivation of protein phosphatase 2A (PP2A) during M phase: does not directly inhibit PP2A but acts by mediating phosphorylation and subsequent activation of ARPP19 and ENSA at 'Ser-62' and 'Ser-67', respectively. ARPP19 and ENSA are phosphatase inhibitors that specifically inhibit the PPP2R2D (PR55-delta) subunit of PP2A. Inactivation of PP2A during M phase is essential to keep cyclin-B1-CDK1 activity high. Following DNA damage, it is also involved in checkpoint recovery by being inhibited. The polypeptide is Serine/threonine-protein kinase greatwall (MASTL) (Ailuropoda melanoleuca (Giant panda)).